A 412-amino-acid chain; its full sequence is MNSNQNNDIKTKHHFPLLLALALTMGVFAAGSEELVISPLLPDLAKAFSSDVSVLALSISIYGVMIFIGAPLLVPLGDKYSRELSLLAGLMIFIIGTVICALAQNIFFFFLGRALSGLAAGAFVPTAYAVVGDRVPYTYRGKVMGLIVSSWSLALIFGVPLGSFIGGVLHWRWTFWIFALMGVLVVLLILLEMRRHAQHKNSGKEEIEEPAGTFRDALKVPRVPVYITITFCNMIGFYGMYSFLGTYLQDVFTGGNTAAGLFIMIYGIGFSMSVITGKIADRIGKMRSLLIALGVISVLLACLPYAPASMFLLIASLFIWGLMQSLTVTLLSTILSDCSERHRGKVMVFYSLASNLAVTLGSALMGPVYVAYGYAAVGLICAAITVLGFVLSVFAYKKYGKLEQKADQSLSQ.

A run of 11 helical transmembrane segments spans residues 17–37 (LLLALALTMGVFAAGSEELVI), 54–74 (VLALSISIYGVMIFIGAPLLV), 91–111 (MIFIIGTVICALAQNIFFFFL), 112–132 (GRALSGLAAGAFVPTAYAVVG), 146–166 (LIVSSWSLALIFGVPLGSFIG), 173–193 (WTFWIFALMGVLVVLLILLEM), 225–245 (VYITITFCNMIGFYGMYSFLG), 257–277 (TAAGLFIMIYGIGFSMSVITG), 299–319 (LLACLPYAPASMFLLIASLFI), 346–366 (VMVFYSLASNLAVTLGSALMG), and 375–395 (AAVGLICAAITVLGFVLSVFA).

Belongs to the major facilitator superfamily.

The protein resides in the cell membrane. This is an uncharacterized protein from Bacillus subtilis (strain 168).